A 121-amino-acid polypeptide reads, in one-letter code: uncharacterized protein (121 aa).

This is an uncharacterized protein from Microplitis demolitor (Parasitoid wasp).